Reading from the N-terminus, the 189-residue chain is dCTP deaminase (189 aa).

DCTP-binding positions include 112–117 (KSTYAR), 136–138 (TLE), Gln-157, Tyr-171, and Gln-181. Glu-138 serves as the catalytic Proton donor/acceptor.

The protein belongs to the dCTP deaminase family. Homotrimer.

The enzyme catalyses dCTP + H2O + H(+) = dUTP + NH4(+). It functions in the pathway pyrimidine metabolism; dUMP biosynthesis; dUMP from dCTP (dUTP route): step 1/2. In terms of biological role, catalyzes the deamination of dCTP to dUTP. The polypeptide is dCTP deaminase (Burkholderia thailandensis (strain ATCC 700388 / DSM 13276 / CCUG 48851 / CIP 106301 / E264)).